Reading from the N-terminus, the 274-residue chain is Protein YehF (274 aa).

The WGR domain maps to 2–78 (RHFIYQDEKS…KDNSLQPSQT (77 aa)).

In terms of biological role, has been implicated in selenate reduction; a mini-Tn10 insertion mutant in 'molR', (which was mapped to 47.3 centisomes i.e. this locus), is defective in the reduction of selenate. The sequence is that of Protein YehF (yehF) from Escherichia coli (strain K12).